Consider the following 266-residue polypeptide: Blue copper protein (266 aa).

Positions 1 to 24 are cleaved as a signal peptide; sequence MAYSKILFCFMIGFVGFLPAITMA. Phytocyanin domains lie at 25 to 56, 57 to 102, and 116 to 216; these read TQYLVGDDRGWTLDFDYQTWAKNKTFKVGDTL, APPP…TVED, and TEYW…TVEG. The N-linked (GlcNAc...) asparagine glycan is linked to asparagine 47. Histidine 156 is a binding site for Cu cation. Asparagine 162 carries an N-linked (GlcNAc...) asparagine glycan. Cysteine 169 and cysteine 203 are disulfide-bonded. Residues cysteine 197, histidine 202, and glutamine 208 each coordinate Cu cation. The chain crosses the membrane as a helical span at residues 245-265; that stretch reads ITSPYKMFVGGAVSIWTILTL.

It is found in the membrane. The chain is Blue copper protein from Petunia hybrida (Petunia).